A 309-amino-acid chain; its full sequence is MIFAITFFMGITSTLAAVLEPMSYYQYTQFQAPLSWEDITGKGLKQALDSCQQSFQWQRWNCPSQDFVQKNSKPEENSPNREDVYVAAISMAAIVHTLTKDCANGVIAGCGCTENALNVPCAHEPTKALEQYEKHFGSGSGAIGHNRRVVGALLQRSLEQECRCKQPGAVQGECQEEECVAVLKPFEAIAQDLLQMYDDAIQLEGASSNLKIMWQNIPLDSLVFMQDSPNYCERDATGLWKGTRGRQCSKDGSGSLEERLSCQQLCRVCGYRVRSQHVRTERRCNCKLVWGFRLQCDVCVQLERQYSCY.

The first 16 residues, 1 to 16, serve as a signal peptide directing secretion; sequence MIFAITFFMGITSTLA. Disulfide bonds link Cys51–Cys62, Cys102–Cys110, Cys112–Cys121, Cys162–Cys179, Cys164–Cys174, Cys232–Cys269, Cys248–Cys262, Cys266–Cys308, Cys284–Cys299, and Cys286–Cys296.

It belongs to the Wnt family.

The protein resides in the secreted. Its subcellular location is the extracellular space. It is found in the extracellular matrix. Its function is as follows. Binds as a ligand to a family of frizzled seven-transmembrane receptors and acts through a cascade of genes on the nucleus. The polypeptide is Wnt inhibitor of Dorsal protein (wntD) (Drosophila melanogaster (Fruit fly)).